Reading from the N-terminus, the 405-residue chain is Sialic acid transporter NanX (405 aa).

Over 1–20 (MATAWYKQVNPPQRKALFSA) the chain is Cytoplasmic. The helical transmembrane segment at 21–41 (WLGYVFDGFDFMMIFYILHII) threads the bilayer. Over 42–53 (KADLGITDIQAT) the chain is Periplasmic. Residues 54-74 (LIGTVAFIARPIGGGFFGAMA) form a helical membrane-spanning segment. Residues 75-80 (DKYGRK) are Cytoplasmic-facing. The helical transmembrane segment at 81–101 (PMMMWAIFIYSVGTGLSGIAT) threads the bilayer. Residue Asn-102 is a topological domain, periplasmic. The helical transmembrane segment at 103-123 (LYMLAVCRFIVGLGMSGEYAC) threads the bilayer. Residues 124 to 139 (ASTYAVESWPKNLQSK) are Cytoplasmic-facing. The chain crosses the membrane as a helical span at residues 140 to 160 (ASAFLVSGFSVGNIIAAQIIP). The Periplasmic portion of the chain corresponds to 161–164 (QFAE). Residues 165–185 (VYGWRNSFFIGLLPVLLVLWI) form a helical membrane-spanning segment. Residues 186–214 (RKSAPESQEWIEDKYKDKSTFLSVFRKPH) are Cytoplasmic-facing. A helical transmembrane segment spans residues 215–235 (LSISMIVFLVCFCLFGANWPI). Over 236–250 (NGLLPSYLADNGVNT) the chain is Periplasmic. A helical membrane pass occupies residues 251–271 (VVISTLMTIAGLGTLTGTIFF). Residues 272–282 (GFVGDKIGVKK) are Cytoplasmic-facing. A helical transmembrane segment spans residues 283-303 (AFVVGLITSFIFLCPLFFISV). Topologically, residues 304–307 (KNSS) are periplasmic. A helical transmembrane segment spans residues 308 to 328 (LIGLCLFGLMFTNLGIAGLVP). Residues 329–344 (KFIYDYFPTKLRGLGT) lie on the Cytoplasmic side of the membrane. Residues 345-365 (GLIYNLGATGGMAAPVLATYI) traverse the membrane as a helical segment. At 366-371 (SGYYGL) the chain is on the periplasmic side. Residues 372 to 392 (GVSLFIVTVAFSALLILLVGF) traverse the membrane as a helical segment. At 393 to 405 (DIPGKIYKLSVAK) the chain is on the cytoplasmic side.

This sequence belongs to the major facilitator superfamily. Sugar transporter (TC 2.A.1.1) family.

The protein resides in the cell inner membrane. Probably transports across the inner membrane the two dehydrated forms of N-acetylneuraminate (Neu5Ac), 2,7-anhydro-N-acetylneuraminate (2,7-AN) and 2-deoxy-2,3-didehydro-N-acetylneuraminate (2,3-EN). This chain is Sialic acid transporter NanX, found in Escherichia coli (strain K12).